The chain runs to 361 residues: Histidinol-phosphate aminotransferase (361 aa).

At Lys-219 the chain carries N6-(pyridoxal phosphate)lysine.

The protein belongs to the class-II pyridoxal-phosphate-dependent aminotransferase family. Histidinol-phosphate aminotransferase subfamily. Homodimer. It depends on pyridoxal 5'-phosphate as a cofactor.

The catalysed reaction is L-histidinol phosphate + 2-oxoglutarate = 3-(imidazol-4-yl)-2-oxopropyl phosphate + L-glutamate. It functions in the pathway amino-acid biosynthesis; L-histidine biosynthesis; L-histidine from 5-phospho-alpha-D-ribose 1-diphosphate: step 7/9. In Acinetobacter baumannii (strain SDF), this protein is Histidinol-phosphate aminotransferase.